The chain runs to 274 residues: Undecaprenyl-diphosphatase 1 (274 aa).

8 consecutive transmembrane segments (helical) span residues 7 to 27, 48 to 68, 88 to 108, 115 to 135, 151 to 171, 189 to 209, 221 to 241, and 253 to 273; these read LEIFKAVILGIVQGITEWLPV, FISTFLVVIQFGSILAVLVIF, VRLWLKVIIAVIPSGVIGILF, LFFNSTVVAIALIVYGIIMIG, VTYKLALCIGLFQCLALIPGT, YVAAEFSFFLAIPTMLGASAL, FEWLILGVGSVVAFVVSIVVI, and FKVFGYYRIVLGIVVLAYFFL.

The protein belongs to the UppP family.

It localises to the cell membrane. It carries out the reaction di-trans,octa-cis-undecaprenyl diphosphate + H2O = di-trans,octa-cis-undecaprenyl phosphate + phosphate + H(+). In terms of biological role, catalyzes the dephosphorylation of undecaprenyl diphosphate (UPP). Confers resistance to bacitracin. The polypeptide is Undecaprenyl-diphosphatase 1 (Clostridioides difficile (strain 630) (Peptoclostridium difficile)).